Consider the following 639-residue polypeptide: 1,4-alpha-glucan branching enzyme GlgB (639 aa).

D313 (nucleophile) is an active-site residue. Catalysis depends on E366, which acts as the Proton donor.

The protein belongs to the glycosyl hydrolase 13 family. GlgB subfamily. In terms of assembly, monomer.

It catalyses the reaction Transfers a segment of a (1-&gt;4)-alpha-D-glucan chain to a primary hydroxy group in a similar glucan chain.. The protein operates within glycan biosynthesis; glycogen biosynthesis. Catalyzes the formation of the alpha-1,6-glucosidic linkages in glycogen by scission of a 1,4-alpha-linked oligosaccharide from growing alpha-1,4-glucan chains and the subsequent attachment of the oligosaccharide to the alpha-1,6 position. In Butyrivibrio fibrisolvens, this protein is 1,4-alpha-glucan branching enzyme GlgB (glgB).